Here is a 564-residue protein sequence, read N- to C-terminus: MEGQAQPYPFAAVQRGTEVAPQAPFNFSRRYACDRCRGHKLRCIRDQMTVDSPCQRCRKAREKCTIGSSTRPVPARLNRSSQGHKLPGATSSASLTTAAPALSMPPQQALAWATGLGDTEQGDALHLSSVPWLDMFDSAMLDSACDSNHELDFADRSSGSGSGSRGAADDQDGPGDGRVHTITPTSQGTTAVANPFLPGHEFDFSPRFDMPGEQCNSDFEKDCTGAPVHAHLPADERSHVASVEFMHHPVAPIHPPTMASSHRTHSTASNDSSKDSTTGVRDACIQELNELSSTLTKDLHTVVDCKLASSFLFTRSNKGPDEYLFKTLDGSSSQESAIGRMLQGSEKFLDIMKRFNEPAQSAPPFVGLSLRVDAHDFGLLAEAVDGSKNSSEATQLDRRWRILHSYLERRNESPNPLSFGSWLGDNLTYGLARKPDMTAKAAVLLCYTNLLWIYETVFFVICHTLECSPSLAPAIKLPQTVPGLEINGFVLQNHPSLQIKILTQVSSYMLDSVEKALQNMLSDSTFQALLETVLQQEGLQYSPGEETGMISVRCLIDKVNKMLD.

The zn(2)-C6 fungal-type DNA-binding region spans 33 to 64 (CDRCRGHKLRCIRDQMTVDSPCQRCRKAREKC). Disordered stretches follow at residues 68–93 (SSTR…TSSA), 152–197 (DFAD…NPFL), and 252–278 (PIHP…DSTT). Polar residues-rich tracts occupy residues 182 to 192 (ITPTSQGTTAV) and 258 to 278 (MASS…DSTT).

It is found in the nucleus. Its function is as follows. Transcription factor that specifically regulates the expression of the gene cluster that mediates the biosynthesis of the mycotoxins phomacins, leucine-derived cytochalasans with potent actin polymerization-inhibitory activities and monocot-specific antigerminative activities. This is Phomacin cluster regulator phmR from Phaeosphaeria nodorum (strain SN15 / ATCC MYA-4574 / FGSC 10173) (Glume blotch fungus).